Here is a 506-residue protein sequence, read N- to C-terminus: Trans-cinnamate 4-monooxygenase (506 aa).

A helical membrane pass occupies residues 3-23 (LLLLEKTLLALFIAATIAVTI). (E)-cinnamate is bound by residues 213–218 (RSRLAQ) and Ala-307. Cys-448 provides a ligand contact to heme.

It belongs to the cytochrome P450 family. Heme is required as a cofactor.

It is found in the membrane. It carries out the reaction (E)-cinnamate + reduced [NADPH--hemoprotein reductase] + O2 = (E)-4-coumarate + oxidized [NADPH--hemoprotein reductase] + H2O + H(+). Its pathway is phenylpropanoid metabolism; trans-4-coumarate biosynthesis; trans-4-coumarate from trans-cinnamate: step 1/1. Its function is as follows. Catalyzes the first oxidative step of the phenylpropanoid pathway in higher plants by transforming trans-cinnamate into p-coumarate. The compounds formed by this pathway are essential components for lignification, pollination, and defense against ultraviolet light, predators and pathogens. The sequence is that of Trans-cinnamate 4-monooxygenase (CYP73A3) from Medicago sativa (Alfalfa).